The chain runs to 495 residues: Ribosomal protein uS12 methylthiotransferase RimO (495 aa).

One can recognise an MTTase N-terminal domain in the interval 5 to 121; that stretch reads RTVALVTLGC…ISDRLQTILN (117 aa). C14, C50, and C84 together coordinate [4Fe-4S] cluster. The segment at 145–183 is disordered; sequence QSAGADVALPGHGAPEGLPEDLPEGLAPESGPRAPLRRR. In terms of domain architecture, Radical SAM core spans 184 to 415; sequence LDGSPVASVK…RLAEELVAQR (232 aa). 3 residues coordinate [4Fe-4S] cluster: C198, C202, and C205. The TRAM domain occupies 417–484; it reads EERVGETVHV…GVDLVAEPLP (68 aa).

This sequence belongs to the methylthiotransferase family. RimO subfamily. Requires [4Fe-4S] cluster as cofactor.

The protein localises to the cytoplasm. The enzyme catalyses L-aspartate(89)-[ribosomal protein uS12]-hydrogen + (sulfur carrier)-SH + AH2 + 2 S-adenosyl-L-methionine = 3-methylsulfanyl-L-aspartate(89)-[ribosomal protein uS12]-hydrogen + (sulfur carrier)-H + 5'-deoxyadenosine + L-methionine + A + S-adenosyl-L-homocysteine + 2 H(+). In terms of biological role, catalyzes the methylthiolation of an aspartic acid residue of ribosomal protein uS12. The chain is Ribosomal protein uS12 methylthiotransferase RimO from Streptomyces avermitilis (strain ATCC 31267 / DSM 46492 / JCM 5070 / NBRC 14893 / NCIMB 12804 / NRRL 8165 / MA-4680).